Reading from the N-terminus, the 495-residue chain is UDP-glycosyltransferase 1 (495 aa).

His-24 functions as the Proton acceptor in the catalytic mechanism. His-24 is an an anthocyanidin binding site. The active-site Charge relay is the Asp-129. Residues Gln-358, His-373, Trp-376, Asn-377, Ser-378, and Glu-381 each contribute to the UDP-alpha-D-glucose site. Gly-396 is an an anthocyanidin binding site. The UDP-alpha-D-glucose site is built by Asp-397 and Gln-398.

The protein belongs to the UDP-glycosyltransferase family.

The enzyme catalyses oleanolate + UDP-alpha-D-glucose = oleanolate 3-O-beta-D-glucoside + UDP + H(+). Functionally, catalyzes the transfer of a glucose (Glc) moiety from UDP-Glc to the C-3 position of the oleanane sapogenins oleanolate and hederagenin. The monoglucosylated hederagenin 3-O-beta-D-glucoside is a feeding deterrent of the yellow-striped flea beetle (Phyllotreta nemorum). The polypeptide is UDP-glycosyltransferase 1 (Barbarea vulgaris (Yellow rocket)).